The chain runs to 780 residues: Acyl-CoA dehydrogenase family member 11 (780 aa).

At Lys-177 the chain carries N6-acetyllysine. The residue at position 324 (Tyr-324) is a Phosphotyrosine. Residue Lys-391 is modified to N6-succinyllysine. FAD is bound by residues 504–514 (FCMTEPDVASS) and 538–540 (WSS). Ser-514 provides a ligand contact to substrate. A substrate-binding site is contributed by 629–632 (GPGR). FAD-binding positions include Arg-657, Gln-727, and 727 to 731 (QVCGG). A substrate-binding site is contributed by Gly-755. 756 to 758 (PDE) is an FAD binding site.

This sequence belongs to the acyl-CoA dehydrogenase family. Homodimer. Requires FAD as cofactor. As to expression, widely expressed with highest levels in brain followed by liver, heart and kidney.

The protein resides in the peroxisome. It localises to the mitochondrion membrane. The enzyme catalyses a 2,3-saturated acyl-CoA + oxidized [electron-transfer flavoprotein] + H(+) = a (2E)-enoyl-CoA + reduced [electron-transfer flavoprotein]. It carries out the reaction docosanoyl-CoA + oxidized [electron-transfer flavoprotein] + H(+) = (2E)-docosenoyl-CoA + reduced [electron-transfer flavoprotein]. It catalyses the reaction tetracosanoyl-CoA + oxidized [electron-transfer flavoprotein] + H(+) = (2E)-tetracosenoyl-CoA + reduced [electron-transfer flavoprotein]. The catalysed reaction is eicosanoyl-CoA + oxidized [electron-transfer flavoprotein] + H(+) = (2E)-eicosenoyl-CoA + reduced [electron-transfer flavoprotein]. The enzyme catalyses hexacosanoyl-CoA + oxidized [electron-transfer flavoprotein] + H(+) = (2E)-hexacosenoyl-CoA + reduced [electron-transfer flavoprotein]. It carries out the reaction tricosanoyl-CoA + oxidized [electron-transfer flavoprotein] + H(+) = (2E)-tricosenoyl-CoA + reduced [electron-transfer flavoprotein]. It participates in lipid metabolism; fatty acid beta-oxidation. In terms of biological role, acyl-CoA dehydrogenase, that exhibits maximal activity towards saturated C22-CoA. Probably participates in beta-oxydation and energy production but could also play a role in the metabolism of specific fatty acids to control fatty acids composition of cellular lipids in brain. The chain is Acyl-CoA dehydrogenase family member 11 (ACAD11) from Homo sapiens (Human).